Here is a 742-residue protein sequence, read N- to C-terminus: Two-component response regulator-like PRR37 (742 aa).

The Response regulatory domain occupies 63-181 (KVLLVDSDDS…ELKNLWQHVW (119 aa)). Low complexity predominate over residues 186-195 (SSSGSGSESG). 6 disordered regions span residues 186–249 (SSSG…SWTK), 290–346 (PCTS…PLQN), 375–402 (DAQQ…NRDN), 478–570 (MKSN…VQSN), 590–671 (NGGS…GNDM), and 697–742 (NFGK…AADR). The segment covering 236–248 (DNGSGTQAQSSWT) has biased composition (polar residues). The span at 299 to 313 (KQKETNDDFKGKDLE) shows a compositional bias: basic and acidic residues. Polar residues predominate over residues 318 to 330 (RNLNTAYQSSPNE). The span at 331-341 (RSIKPTDRRNE) shows a compositional bias: basic and acidic residues. Residues 380 to 390 (ARATNAPNCSS) show a composition bias toward polar residues. Residues 490–502 (GSNGSSNNNDMGS) are compositionally biased toward low complexity. The segment covering 503 to 512 (TTKNVVTKPS) has biased composition (polar residues). Positions 618 to 634 (NGSNSGSNNGSNGQNGS) are enriched in low complexity. A compositionally biased stretch (gly residues) spans 656 to 667 (GPGGGNGSGSGS). The region spanning 682–724 (RVAAVIKFRQKRKERNFGKKVRYQSRKRLAEQRPRVRGQFVRQ) is the CCT domain. A compositionally biased stretch (basic residues) spans 697–708 (NFGKKVRYQSRK). The span at 719–731 (GQFVRQAVQDQQQ) shows a compositional bias: low complexity.

This sequence belongs to the ARR-like family.

Its subcellular location is the nucleus. Controls photoperiodic flowering response. Seems to be one of the component of the circadian clock. Expression of several members of the ARR-like family is controlled by circadian rhythm. The particular coordinated sequential expression of PRR73, PRR37, PRR95, PRR59 and PPR1 result to circadian waves that may be at the basis of the endogenous circadian clock. In Oryza sativa subsp. indica (Rice), this protein is Two-component response regulator-like PRR37 (PRR37).